The chain runs to 142 residues: MMKLYIVFGFIAFSAAYVVPEGYYEPEYYPADGYESERVARASPAELIFDEDLADEPEVEEPQYYIRTRRSLQPGAPNFPMPGSQLPTSITSNIEKQGPNTAATINAQHKTDRYDVGATWSKVIRGPGRSKPNWSIGGTYRW.

The first 16 residues, 1–16, serve as a signal peptide directing secretion; sequence MMKLYIVFGFIAFSAA. A propeptide spanning residues 17 to 70 is cleaved from the precursor; it reads YVVPEGYYEPEYYPADGYESERVARASPAELIFDEDLADEPEVEEPQYYIRTRR. A disordered region spans residues 72–96; it reads LQPGAPNFPMPGSQLPTSITSNIEK. Residues 85-96 are compositionally biased toward polar residues; it reads QLPTSITSNIEK.

This sequence belongs to the coleoptericin family. Strongly expressed in the fat body and the Malpighian tubules, and weakly expressed in hemocytes and midgut.

It is found in the secreted. Its function is as follows. Has strong antibacterial activity against E.coli, Streptococcus pyogenes, Staphylococcus aureus but not against Pseudomonas aeruginosa. The sequence is that of Rhinocerosin from Oryctes rhinoceros (Coconut rhinoceros beetle).